We begin with the raw amino-acid sequence, 333 residues long: Phosphate acyltransferase (333 aa).

It belongs to the PlsX family. As to quaternary structure, homodimer. Probably interacts with PlsY.

It is found in the cytoplasm. It carries out the reaction a fatty acyl-[ACP] + phosphate = an acyl phosphate + holo-[ACP]. Its pathway is lipid metabolism; phospholipid metabolism. In terms of biological role, catalyzes the reversible formation of acyl-phosphate (acyl-PO(4)) from acyl-[acyl-carrier-protein] (acyl-ACP). This enzyme utilizes acyl-ACP as fatty acyl donor, but not acyl-CoA. The chain is Phosphate acyltransferase from Helicobacter hepaticus (strain ATCC 51449 / 3B1).